The primary structure comprises 531 residues: Phosphoinositide phospholipase C 9 (531 aa).

The region spanning arginine 107–arginine 253 is the PI-PLC X-box domain. The PI-PLC Y-box domain maps to glutamate 265–leucine 385. Phosphoserine is present on serine 276. One can recognise a C2 domain in the interval asparagine 386 to aspartate 513.

The cofactor is Ca(2+). As to expression, expressed in leaves, roots, flowers and siliques.

Its subcellular location is the cell membrane. It catalyses the reaction a 1,2-diacyl-sn-glycero-3-phospho-(1D-myo-inositol-4,5-bisphosphate) + H2O = 1D-myo-inositol 1,4,5-trisphosphate + a 1,2-diacyl-sn-glycerol + H(+). In terms of biological role, the production of the second messenger molecules diacylglycerol (DAG) and inositol 1,4,5-trisphosphate (IP3) is mediated by activated phosphatidylinositol-specific phospholipase C enzymes. The protein is Phosphoinositide phospholipase C 9 (PLC9) of Arabidopsis thaliana (Mouse-ear cress).